The chain runs to 291 residues: ATP synthase gamma chain (291 aa).

Belongs to the ATPase gamma chain family. F-type ATPases have 2 components, CF(1) - the catalytic core - and CF(0) - the membrane proton channel. CF(1) has five subunits: alpha(3), beta(3), gamma(1), delta(1), epsilon(1). CF(0) has three main subunits: a, b and c.

Its subcellular location is the cell inner membrane. Functionally, produces ATP from ADP in the presence of a proton gradient across the membrane. The gamma chain is believed to be important in regulating ATPase activity and the flow of protons through the CF(0) complex. In Methylobacillus flagellatus (strain ATCC 51484 / DSM 6875 / VKM B-1610 / KT), this protein is ATP synthase gamma chain.